Reading from the N-terminus, the 261-residue chain is RING finger and CHY zinc finger domain-containing protein 1 (261 aa).

The CHY-type zinc finger occupies 13–80 (LAQGPRGCEH…AQQTCEDCST (68 aa)). Cys20, His22, Cys33, Cys34, Cys40, Cys43, His44, His50, Cys62, Cys65, Cys75, Cys78, Cys87, Cys90, His101, Cys102, Cys105, Cys108, His118, Cys119, Cys122, Cys125, His134, and Cys136 together coordinate Zn(2+). Residues 82 to 144 (FGEYYCSICH…KCIENVSRQN (63 aa)) form a CTCHY-type zinc finger. The RING-type zinc finger occupies 145–189 (CPICLEDIHTSRVVAHVLPCGHLLHRTCYEEMLKEGYRCPLCMHS).

As to quaternary structure, monomer and homodimer. Interacts with AR, MDM2, KAT5, PLAG1, PLAGL2, COPE, UBE2D2 and GORAB/NTKLBP1. Post-translationally, subject to ubiquitination and proteasomal degradation. Interaction with PLAGL2 or KAT5 enhances protein stability. As to expression, detected in testis, liver, kidney and heart.

The protein localises to the nucleus. Its subcellular location is the nucleus speckle. It localises to the cytoplasm. The catalysed reaction is S-ubiquitinyl-[E2 ubiquitin-conjugating enzyme]-L-cysteine + [acceptor protein]-L-lysine = [E2 ubiquitin-conjugating enzyme]-L-cysteine + N(6)-ubiquitinyl-[acceptor protein]-L-lysine.. It functions in the pathway protein modification; protein ubiquitination. Functionally, E3 ubiquitin-protein ligase that mediates ubiquitination of target proteins, including p53/TP53, TP73, HDAC1 and CDKN1B. Mediates ubiquitination and degradation of p53/TP53; preferentially acts on tetrameric p53/TP53. Catalyzes monoubiquitinates the translesion DNA polymerase POLH. Involved in the ribosome-associated quality control (RQC) pathway, which mediates the extraction of incompletely synthesized nascent chains from stalled ribosomes: RCHY1 acts downstream of NEMF and recognizes CAT tails associated with stalled nascent chains, leading to their ubiquitination and degradation. This is RING finger and CHY zinc finger domain-containing protein 1 (Rchy1) from Mus musculus (Mouse).